Reading from the N-terminus, the 194-residue chain is MLSSTLRVAVVCVSNVNRSMEAHSILRRKGLSVRSFGTESHVRLPGPRPNRPVVYDFATTYKEMYNDLLRKDRERYTRNGILHILGRNERIKPGPERFQECTDSFDVIFTCEESVYDTVVEDLCSREQQTFQPVHVINMEIQDTLEDATLGAFLICEICQCLQQSDDMEDNLEELLLQMEEKAGKSFLHTVCFY.

The protein belongs to the SSU72 phosphatase family.

The protein resides in the nucleus. The enzyme catalyses O-phospho-L-seryl-[protein] + H2O = L-seryl-[protein] + phosphate. It catalyses the reaction O-phospho-L-threonyl-[protein] + H2O = L-threonyl-[protein] + phosphate. Protein phosphatase that catalyzes the dephosphorylation of the C-terminal domain of RNA polymerase II. Plays a role in RNA processing and termination. The sequence is that of RNA polymerase II subunit A C-terminal domain phosphatase SSU72 like protein 5 from Homo sapiens (Human).